Consider the following 219-residue polypeptide: 2-hydroxy-3-keto-5-methylthiopentenyl-1-phosphate phosphatase (219 aa).

It belongs to the HAD-like hydrolase superfamily. MtnX family.

The enzyme catalyses 2-hydroxy-5-methylsulfanyl-3-oxopent-1-enyl phosphate + H2O = 1,2-dihydroxy-5-(methylsulfanyl)pent-1-en-3-one + phosphate. Its pathway is amino-acid biosynthesis; L-methionine biosynthesis via salvage pathway; L-methionine from S-methyl-5-thio-alpha-D-ribose 1-phosphate: step 4/6. Functionally, dephosphorylates 2-hydroxy-3-keto-5-methylthiopentenyl-1-phosphate (HK-MTPenyl-1-P) yielding 1,2-dihydroxy-3-keto-5-methylthiopentene (DHK-MTPene). The protein is 2-hydroxy-3-keto-5-methylthiopentenyl-1-phosphate phosphatase of Bacillus cytotoxicus (strain DSM 22905 / CIP 110041 / 391-98 / NVH 391-98).